The primary structure comprises 356 residues: Tyrosine recombinase XerS (356 aa).

The region spanning 16-121 is the Core-binding (CB) domain; it reads IMPWYVLDYY…ALSSLYKYLT (106 aa). A Tyr recombinase domain is found at 169–354; the sequence is AFLDYVDKEY…VNDEQKNALD (186 aa). Active-site residues include R210, K234, H306, R309, and H332. Y341 functions as the O-(3'-phospho-DNA)-tyrosine intermediate in the catalytic mechanism.

The protein belongs to the 'phage' integrase family. XerS subfamily.

The protein resides in the cytoplasm. Its activity is regulated as follows. FtsK is required for recombination. Its function is as follows. Site-specific tyrosine recombinase, which acts by catalyzing the cutting and rejoining of the recombining DNA molecules. Essential to convert dimers of the bacterial chromosome into monomers to permit their segregation at cell division. This is Tyrosine recombinase XerS from Streptococcus equi subsp. equi (strain 4047).